Consider the following 2440-residue polypeptide: Nuclear receptor corepressor 1 (2440 aa).

Over residues 1–18 the composition is skewed to polar residues; the sequence is MSSSGYPPNQGAFSTEQS. 2 disordered regions span residues 1–177 and 206–231; these read MSSS…SKLS and QQQL…VEQK. The tract at residues 1–373 is interaction with ZBTB33 and HEXIM1; that stretch reads MSSSGYPPNQ…QRGAGLSATI (373 aa). The span at 51–64 shows a compositional bias: low complexity; that stretch reads SQASQLLQQQQQQQ. Basic and acidic residues-rich tracts occupy residues 77–88, 99–119, and 141–155; these read PGSDRPQERRTS, VDHD…DSHF, and ADAK…KHEA. Ser-172 carries the post-translational modification Phosphoserine. The stretch at 174-216 forms a coiled coil; it reads SKLSKEELIQSMDRVDREIAKVEQQILKLKKKQQQLEEEAAKP. The span at 212–221 shows a compositional bias: basic and acidic residues; it reads EAAKPPEPEK. The residue at position 224 (Ser-224) is a Phosphoserine. The tract at residues 254-312 is interaction with SIN3A/B; it reads FEGLGPKVELPLYNQPSDTKVYHENIKTNQVMRKKLILFFKRRNHARKQREQKICQRYD. A coiled-coil region spans residues 299 to 328; sequence ARKQREQKICQRYDQLMEAWEKKVDRIENN. Positions 435-486 constitute an SANT 1 domain; the sequence is QFMNVWTDHEKEIFKDKFIQHPKNFGLIASYLERKSVPDCVLYYYLTKKNEN. Disordered regions lie at residues 497 to 632 and 677 to 915; these read KRRG…TEEE and NLLQ…GSIL. Positions 501 to 557 form a coiled coil; sequence RNQQIARPSQEEKVEEKEEDKAEKTEKKEEEKKDEEEKDEKEDSKENTKEKDKIDGT. Composition is skewed to basic and acidic residues over residues 509–531 and 541–556; these read SQEE…KEEE and KEDS…KIDG. Residues 592 to 605 are compositionally biased toward low complexity; that stretch reads EAAAASAAAAAATE. The segment covering 606–617 has biased composition (pro residues); the sequence is EPPPPLPPPPEP. The SANT 2 domain occupies 623 to 674; sequence VETSRWTEEEMEVAKKGLVEHGRNWAAIAKMVGTKSEAQCKNFYFNYKRRHN. The segment covering 698-708 has biased composition (polar residues); sequence QCESVASTVSA. Over residues 709–728 the composition is skewed to acidic residues; it reads QEDEDIEASNEEENPEDSEV. Over residues 752–768 the composition is skewed to low complexity; that stretch reads ELEPTTETAPSTSPSLA. Residues 781–792 are compositionally biased toward polar residues; the sequence is ETQVNDSISAET. The segment covering 820-859 has biased composition (basic and acidic residues); it reads DSVDVEVRVPENHASKVEGDNTKERDLDRASEKVEPRDED. Composition is skewed to polar residues over residues 864–883 and 906–915; these read QQIN…SATC and SLLNPTGSIL. Residues 988–1816 form an interaction with ETO region; the sequence is RSSTSPCGTS…QGLPASRYNT (829 aa). The residue at position 999 (Ser-999) is a Phosphoserine. The disordered stretch occupies residues 1022-1046; that stretch reads VRLPTTRPTRPPPPLIPSSKTTVAS. Residue Lys-1106 forms a Glycyl lysine isopeptide (Lys-Gly) (interchain with G-Cter in SUMO1); alternate linkage. Lys-1106 is covalently cross-linked (Glycyl lysine isopeptide (Lys-Gly) (interchain with G-Cter in SUMO2); alternate). At Ser-1111 the chain carries Phosphoserine. Lys-1184 is covalently cross-linked (Glycyl lysine isopeptide (Lys-Gly) (interchain with G-Cter in SUMO2)). The segment at 1184–1204 is disordered; it reads KGSISRMPIEDSSPEKGREEA. Ser-1195, Ser-1196, Ser-1249, Ser-1263, Ser-1281, and Ser-1322 each carry phosphoserine. Lys-1336 carries the post-translational modification N6-acetyllysine. At Thr-1367 the chain carries Phosphothreonine. Lys-1389 participates in a covalent cross-link: Glycyl lysine isopeptide (Lys-Gly) (interchain with G-Cter in SUMO2). Lys-1412 is covalently cross-linked (Glycyl lysine isopeptide (Lys-Gly) (interchain with G-Cter in SUMO2); alternate). At Lys-1412 the chain carries N6-acetyllysine; alternate. The segment at 1440–1459 is disordered; it reads AGETVRSRHTSVVSSGPSVL. Phosphoserine occurs at positions 1450 and 1472. Residues 1488–1512 show a composition bias toward polar residues; sequence YQNTMSRGSPMMNRTSDVTISSNKS. The interval 1488 to 1554 is disordered; the sequence is YQNTMSRGSP…SPFDPHHRGS (67 aa). The interaction with C1D stretch occupies residues 1501–2440; sequence RTSDVTISSN…QYETLSDSDD (940 aa). Residue Lys-1518 forms a Glycyl lysine isopeptide (Lys-Gly) (interchain with G-Cter in SUMO2) linkage. Ser-1592 bears the Phosphoserine mark. 2 disordered regions span residues 1690–1759 and 1884–1922; these read PRPY…SPSP and SSAF…LRTR. 2 stretches are compositionally biased toward basic and acidic residues: residues 1712–1729 and 1903–1921; these read AERE…RERI and AGKD…ELRT. A CORNR box 1 motif is present at residues 1933-1937; the sequence is IDVII. The disordered stretch occupies residues 1943-1969; it reads SDKDARERGSQSSDSSSSLSSHRYETP. Low complexity predominate over residues 1952–1963; that stretch reads SQSSDSSSSLSS. 2 positions are modified to phosphoserine: Ser-1977 and Ser-1981. The segment at 2006 to 2041 is disordered; that stretch reads PTRQYEGPLHHYRPQQESPSPQQQLPPSSQAEGMGQ. A compositionally biased stretch (low complexity) spans 2020–2035; sequence QQESPSPQQQLPPSSQ. Residues 2032-2115 are ID1; sequence PSSQAEGMGQ…QAQSVHHQRP (84 aa). Residues 2047–2050 are required for interaction with RARA in the absence of its ligand; it reads RLIT. Positions 2055 to 2059 match the CORNR box 2 motif; that stretch reads ICQII. Residues 2067-2086 are compositionally biased toward low complexity; the sequence is QVSSQTPQQPPTSTFQNSPS. The segment at 2067–2155 is disordered; the sequence is QVSSQTPQQP…PYEPISPPQV (89 aa). The segment covering 2087 to 2110 has biased composition (polar residues); that stretch reads ALVSTPVRTKTSNRYSPESQAQSV. Phosphoserine is present on residues Ser-2102, Ser-2120, Ser-2136, Ser-2151, and Ser-2184. The segment covering 2124 to 2142 has biased composition (basic and acidic residues); sequence LVDKSRGSRPGKSPERSHV. Residues 2212–2273 are ID2; sequence IFRKLNSSGG…EDIIRKALMG (62 aa). The CORNR box 3 motif lies at 2263–2267; sequence LEDII. The disordered stretch occupies residues 2287–2440; sequence SQPMGVVPGT…QYETLSDSDD (154 aa). Residues 2296-2305 show a composition bias toward polar residues; sequence TANTSVVTSG. Thr-2399 bears the Phosphothreonine mark. Composition is skewed to polar residues over residues 2407–2418 and 2431–2440; these read AVNQAAPHQQNR and QYETLSDSDD. 2 positions are modified to phosphoserine: Ser-2436 and Ser-2438.

The protein belongs to the N-CoR nuclear receptor corepressors family. As to quaternary structure, forms a large corepressor complex that contains SIN3A/B and histone deacetylases HDAC1 and HDAC2. This complex associates with the thyroid receptor (TR) and the retinoid acid receptor (RAR) in the absence of ligand. Interacts directly with RARA; the interaction is facilitated with RARA trimethylation. Component of the N-Cor repressor complex, at least composed of CBFA2T3, HEXIM1, NCOR1, NCOR2, HDAC3, TBL1X, TBL1XR1, CORO2A and GPS2. Interacts with ZBTB33; the interaction serves to recruit the N-CoR complex to promoter regions containing methylated CpG dinucleotides. Interacts with TRIM28 and KDM3A. Interacts (via the RD1 domain) with BAZ1A (via its N-terminal); the interaction corepresses a number of NCOR1-regulated genes. Interacts with BCL6, C1D, DACH1, HEXIM1, HDAC7, RORA, RORC, SAP30, SIAH2, SIN3A and SIN3B. May interact with DEAF1. Interacts with RXRA. Interacts with SETD5. Interacts with VDR. Interacts with ZBTB7A. Interacts with AR. Interacts with HDAC3. Post-translationally, ubiquitinated; mediated by SIAH2 and leading to its subsequent proteasomal degradation.

It localises to the nucleus. In terms of biological role, mediates transcriptional repression by certain nuclear receptors. Part of a complex which promotes histone deacetylation and the formation of repressive chromatin structures which may impede the access of basal transcription factors. Participates in the transcriptional repressor activity produced by BCL6. Recruited by ZBTB7A to the androgen response elements/ARE on target genes, negatively regulates androgen receptor signaling and androgen-induced cell proliferation. Mediates the NR1D1-dependent repression and circadian regulation of TSHB expression. The NCOR1-HDAC3 complex regulates the circadian expression of the core clock gene ARTNL/BMAL1 and the genes involved in lipid metabolism in the liver. In Homo sapiens (Human), this protein is Nuclear receptor corepressor 1 (NCOR1).